Here is a 364-residue protein sequence, read N- to C-terminus: Endoglucanase A (364 aa).

Glu169 (proton donor) is an active-site residue. Catalysis depends on Glu293, which acts as the Nucleophile.

This sequence belongs to the glycosyl hydrolase 5 (cellulase A) family.

The protein resides in the cytoplasm. It catalyses the reaction Endohydrolysis of (1-&gt;4)-beta-D-glucosidic linkages in cellulose, lichenin and cereal beta-D-glucans.. The enzyme catalyses Endohydrolysis of (1-&gt;4)-beta-D-xylosidic linkages in xylans.. Functionally, hydrolyzes both carboxymethylcellulose and xylan. Probably has a role in hydrolyzing oligosaccharides derived from cellulose, which are transported across the cell wall. This chain is Endoglucanase A (celA), found in Ruminococcus albus.